Consider the following 399-residue polypeptide: Methylthioribose kinase (399 aa).

Residues N40, K57, and 111 to 113 contribute to the ATP site; that span reads EDL. Residue D229 coordinates substrate. 246-248 provides a ligand contact to ATP; it reads DAE. A substrate-binding site is contributed by R344.

The protein belongs to the methylthioribose kinase family. In terms of assembly, homodimer.

The catalysed reaction is 5-(methylsulfanyl)-D-ribose + ATP = 5-(methylsulfanyl)-alpha-D-ribose 1-phosphate + ADP + H(+). It functions in the pathway amino-acid biosynthesis; L-methionine biosynthesis via salvage pathway; S-methyl-5-thio-alpha-D-ribose 1-phosphate from S-methyl-5'-thioadenosine (hydrolase route): step 2/2. In terms of biological role, catalyzes the phosphorylation of methylthioribose into methylthioribose-1-phosphate. The sequence is that of Methylthioribose kinase from Erwinia tasmaniensis (strain DSM 17950 / CFBP 7177 / CIP 109463 / NCPPB 4357 / Et1/99).